A 69-amino-acid polypeptide reads, in one-letter code: Guanine nucleotide-binding protein subunit gamma (69 aa).

Ser-2 is modified (N-acetylserine). The residue at position 66 (Cys-66) is a Cysteine methyl ester. Cys-66 is lipidated: S-geranylgeranyl cysteine. A propeptide spans 67–69 (SVL) (removed in mature form).

It belongs to the G protein gamma family. G proteins are composed of 3 units, alpha, beta and gamma. Interacts with gpbA, and this requires phlp1. Post-translationally, this protein is thought to be subject to lipidation, and this requires phlp1.

The protein resides in the cell membrane. In terms of biological role, guanine nucleotide-binding proteins (G proteins) are involved as a modulator or transducer in various transmembrane signaling systems. This major G-protein of the squid photoreceptor is involved in visual transduction. The beta and gamma chains are required for the GTPase activity, for replacement of GDP by GTP, and for G protein-effector interaction. Required for normal chemotaxis in response to cAMP. This Dictyostelium discoideum (Social amoeba) protein is Guanine nucleotide-binding protein subunit gamma (gpgA).